The chain runs to 500 residues: Probable betaine aldehyde dehydrogenase (500 aa).

NAD(+) is bound at residue 249–254; the sequence is GSLATG. Glutamate 271 serves as the catalytic Proton acceptor. Cysteine 305 acts as the Nucleophile in catalysis.

It belongs to the aldehyde dehydrogenase family.

It carries out the reaction betaine aldehyde + NAD(+) + H2O = glycine betaine + NADH + 2 H(+). It participates in amine and polyamine biosynthesis; betaine biosynthesis via choline pathway; betaine from betaine aldehyde: step 1/1. The chain is Probable betaine aldehyde dehydrogenase (meu8) from Schizosaccharomyces pombe (strain 972 / ATCC 24843) (Fission yeast).